The following is a 532-amino-acid chain: [Pyruvate dehydrogenase [acetyl-transferring]]-phosphatase 2, mitochondrial (532 aa).

Residues 1 to 69 (MSSTVSYWIF…FALRKAYRHT (69 aa)) constitute a mitochondrion transit peptide. The region spanning 107–518 (NSVLRFESNQ…YRDDITVMVV (412 aa)) is the PPM-type phosphatase domain. Mn(2+) contacts are provided by aspartate 144, glycine 145, aspartate 415, and aspartate 511.

This sequence belongs to the PP2C family. The cofactor is Mg(2+).

It is found in the mitochondrion. It carries out the reaction O-phospho-L-seryl-[pyruvate dehydrogenase E1 alpha subunit] + H2O = L-seryl-[pyruvate dehydrogenase E1 alpha subunit] + phosphate. Its function is as follows. Mitochondrial enzyme that catalyzes the dephosphorylation and concomitant reactivation of the alpha subunit of the E1 component of the pyruvate dehydrogenase complex (PDC), thereby stimulating the conversion of pyruvate into acetyl-CoA. Acts as a crucial regulator of T cell metabolism and function, with a particular focus on T-helper Th17. In Mus musculus (Mouse), this protein is [Pyruvate dehydrogenase [acetyl-transferring]]-phosphatase 2, mitochondrial (Pdp2).